A 584-amino-acid polypeptide reads, in one-letter code: DNA mismatch repair protein MutL (584 aa).

This sequence belongs to the DNA mismatch repair MutL/HexB family.

This protein is involved in the repair of mismatches in DNA. It is required for dam-dependent methyl-directed DNA mismatch repair. May act as a 'molecular matchmaker', a protein that promotes the formation of a stable complex between two or more DNA-binding proteins in an ATP-dependent manner without itself being part of a final effector complex. This is DNA mismatch repair protein MutL from Syntrophomonas wolfei subsp. wolfei (strain DSM 2245B / Goettingen).